The following is a 544-amino-acid chain: CRISPR-associated endodeoxyribonuclease Cas12f2 (544 aa).

Residues 1-195 (MNMSKTTISV…KPNERETRYV (195 aa)) form a recognition domain (REC) region. The wedge domain (WED) stretch occupies residues 196–326 (HISKLESPSK…YLQYTYEAEV (131 aa)). A linker region spans residues 327–334 (EANKEYAG). The tract at residues 335–485 (CLGVDIGCSK…VYVKPDYTSQ (151 aa)) is ruvC-I. Active-site residues include Asp339 and Glu430. The segment at 486–520 (TCSSCGADKEKTERPSQAIFRCLNPTCRYYQRDIN) is target nucleic acid-binding (TNB). Zn(2+) is bound by residues Cys487, Cys490, Cys507, and Cys512. Residues 521-541 (ADFNAAVNIAKKALNNTEVVT) form a ruvC-II region. Asp522 is a catalytic residue.

Belongs to the CRISPR-associated endonuclease Cas12f family. An asymmetric homodimer. Guide RNA is probably required for dimerization. The cofactor is Mg(2+). Zn(2+) serves as cofactor.

CRISPR (clustered regularly interspaced short palindromic repeat), is an adaptive immune system that provides protection against mobile genetic elements (viruses, transposable elements and conjugative plasmids). CRISPR clusters contain sequences complementary to antecedent mobile elements and target invading nucleic acids. CRISPR clusters are transcribed and processed into CRISPR RNA (crRNA), which requires a trans-encoded small RNA (tracrRNA), but not this protein (in vitro). Recognizes a short motif in the CRISPR repeat sequences (the 5' PAM or protospacer adjacent motif, TTAT in this organism) to help distinguish self versus nonself, as targets within the CRISPR locus do not have PAMs. Upon expression in E.coli of this protein, a mini CRISPR array and the probable tracrRNA, has dsDNA endonuclease activity. DNA cleavage is centered around positions 21 base pairs 3' of PAM. The mini system does not protect E.coli against transformation by foreign plasmids. This Micrarchaeota archaeon (strain CG1_02_47_40) protein is CRISPR-associated endodeoxyribonuclease Cas12f2.